A 299-amino-acid polypeptide reads, in one-letter code: Caspase-1 (299 aa).

The propeptide occupies 1 to 28 (MLDGKQDNGNVDSVDIKQRTNGGGDEGD). The interval 1–45 (MLDGKQDNGNVDSVDIKQRTNGGGDEGDALGSNSSSQPNRVARMP) is disordered. Active-site residues include H136 and C178. Residues 185 to 195 (GGITLSRTETD) constitute a propeptide that is removed on maturation.

This sequence belongs to the peptidase C14A family. As to quaternary structure, heterotetramer that consists of two anti-parallel arranged heterodimers, each one formed by a 19/18 kDa (p19/18) and a 12 kDa (p12) subunit. In terms of processing, the two subunits are derived from the precursor sequence by an autocatalytic mechanism.

Functionally, involved in the activation cascade of caspases responsible for apoptosis execution. Inhibited by the baculovirus anti-apoptotic protein p35. Cleaves p35 and nuclear immunophilin FKBP46. The sequence is that of Caspase-1 from Spodoptera frugiperda (Fall armyworm).